Reading from the N-terminus, the 118-residue chain is Telomere bouquet protein 2 (118 aa).

In terms of assembly, interacts with bqt1. The bqt1-bqt2-sad1 complex binds rap1.

The protein localises to the cytoplasm. The protein resides in the nucleus. Its subcellular location is the cytoskeleton. It localises to the microtubule organizing center. It is found in the spindle pole body. The protein localises to the chromosome. The protein resides in the telomere. Functionally, involved in chromosome segregation. During meiotic prophase, connects telomeres to the spindle pole body by forming a bridge between the telomere protein rap1 and the spindle pole body protein sad1. The protein is Telomere bouquet protein 2 (bqt2) of Schizosaccharomyces pombe (strain 972 / ATCC 24843) (Fission yeast).